We begin with the raw amino-acid sequence, 262 residues long: Adenosylcobinamide-GDP ribazoletransferase (262 aa).

Helical transmembrane passes span 41–63 (AFPFAGLAIALPSAAVAMALMAL), 68–85 (LFAAFVVVAIQALVTGAL), 115–134 (IGTYAAVALILSFGLRVSAF), 141–163 (FSPLGAAMAILGAACLSRAAMVW), and 201–221 (LLFYLAQVPALGVIAALVAFL).

Belongs to the CobS family. In terms of assembly, associated with a large complex of proteins. It depends on Mg(2+) as a cofactor.

The protein resides in the cell inner membrane. The enzyme catalyses alpha-ribazole + adenosylcob(III)inamide-GDP = adenosylcob(III)alamin + GMP + H(+). It catalyses the reaction alpha-ribazole 5'-phosphate + adenosylcob(III)inamide-GDP = adenosylcob(III)alamin 5'-phosphate + GMP + H(+). The protein operates within cofactor biosynthesis; adenosylcobalamin biosynthesis; adenosylcobalamin from cob(II)yrinate a,c-diamide: step 7/7. In terms of biological role, joins adenosylcobinamide-GDP and alpha-ribazole to generate adenosylcobalamin (Ado-cobalamin). Also synthesizes adenosylcobalamin 5'-phosphate from adenosylcobinamide-GDP and alpha-ribazole 5'-phosphate. This chain is Adenosylcobinamide-GDP ribazoletransferase (cobV), found in Sinorhizobium sp.